Here is a 345-residue protein sequence, read N- to C-terminus: Adenine deaminase (345 aa).

The Zn(2+) site is built by His20, His22, and His204. The Proton donor role is filled by Glu207. Position 285 (Asp285) interacts with Zn(2+). Asp286 is a binding site for substrate.

This sequence belongs to the metallo-dependent hydrolases superfamily. Adenosine and AMP deaminases family. Adenine deaminase type 2 subfamily. Zn(2+) is required as a cofactor.

It carries out the reaction adenine + H2O + H(+) = hypoxanthine + NH4(+). Catalyzes the hydrolytic deamination of adenine to hypoxanthine. Plays an important role in the purine salvage pathway and in nitrogen catabolism. The chain is Adenine deaminase from Ralstonia nicotianae (strain ATCC BAA-1114 / GMI1000) (Ralstonia solanacearum).